Here is a 393-residue protein sequence, read N- to C-terminus: NAD(P)H-quinone oxidoreductase subunit H, chloroplastic (393 aa).

The protein belongs to the complex I 49 kDa subunit family. As to quaternary structure, NDH is composed of at least 16 different subunits, 5 of which are encoded in the nucleus.

The protein localises to the plastid. It is found in the chloroplast thylakoid membrane. It catalyses the reaction a plastoquinone + NADH + (n+1) H(+)(in) = a plastoquinol + NAD(+) + n H(+)(out). It carries out the reaction a plastoquinone + NADPH + (n+1) H(+)(in) = a plastoquinol + NADP(+) + n H(+)(out). Functionally, NDH shuttles electrons from NAD(P)H:plastoquinone, via FMN and iron-sulfur (Fe-S) centers, to quinones in the photosynthetic chain and possibly in a chloroplast respiratory chain. The immediate electron acceptor for the enzyme in this species is believed to be plastoquinone. Couples the redox reaction to proton translocation, and thus conserves the redox energy in a proton gradient. The chain is NAD(P)H-quinone oxidoreductase subunit H, chloroplastic from Calycanthus floridus var. glaucus (Eastern sweetshrub).